Here is a 290-residue protein sequence, read N- to C-terminus: ATP synthase gamma chain (290 aa).

It belongs to the ATPase gamma chain family. As to quaternary structure, F-type ATPases have 2 components, CF(1) - the catalytic core - and CF(0) - the membrane proton channel. CF(1) has five subunits: alpha(3), beta(3), gamma(1), delta(1), epsilon(1). CF(0) has three main subunits: a, b and c.

The protein resides in the cell inner membrane. Its function is as follows. Produces ATP from ADP in the presence of a proton gradient across the membrane. The gamma chain is believed to be important in regulating ATPase activity and the flow of protons through the CF(0) complex. The chain is ATP synthase gamma chain from Chlorobium luteolum (strain DSM 273 / BCRC 81028 / 2530) (Pelodictyon luteolum).